The following is a 396-amino-acid chain: Phosphoglycerate kinase (396 aa).

Residues 24 to 26, Arg-39, 62 to 65, Arg-120, and Arg-153 each bind substrate; these read DFN and HLGR. ATP contacts are provided by residues Lys-203, Gly-294, Glu-325, and 352–355; that span reads GGDS.

This sequence belongs to the phosphoglycerate kinase family. Monomer.

Its subcellular location is the cytoplasm. The enzyme catalyses (2R)-3-phosphoglycerate + ATP = (2R)-3-phospho-glyceroyl phosphate + ADP. It participates in carbohydrate degradation; glycolysis; pyruvate from D-glyceraldehyde 3-phosphate: step 2/5. The protein is Phosphoglycerate kinase of Dictyoglomus turgidum (strain DSM 6724 / Z-1310).